Consider the following 561-residue polypeptide: Arginine--tRNA ligase (561 aa).

The 'HIGH' region signature appears at 129–139; it reads ANPTGPLHVGH.

This sequence belongs to the class-I aminoacyl-tRNA synthetase family. As to quaternary structure, monomer.

Its subcellular location is the cytoplasm. It carries out the reaction tRNA(Arg) + L-arginine + ATP = L-arginyl-tRNA(Arg) + AMP + diphosphate. The chain is Arginine--tRNA ligase from Bordetella petrii (strain ATCC BAA-461 / DSM 12804 / CCUG 43448).